The primary structure comprises 1775 residues: Internalin I (1775 aa).

An N-terminal signal peptide occupies residues 1–28 (MKKKFSIVIISVLLLGYLAPFDTLLVGA). The segment covering 36-50 (DTTVKTAETETATEA) has biased composition (low complexity). Residues 36-97 (DTTVKTAETE…SNIKTEINTD (62 aa)) are disordered. The span at 58-85 (DNEKAEEPKEAEASKETTEKEEKAKTKE) shows a compositional bias: basic and acidic residues. LRR repeat units follow at residues 152–176 (AISQ…EGLQ), 180–201 (NLTS…KDLV), 202–224 (NLVS…EGLV), 225–247 (NLQE…AALP), 248–269 (VLKE…NPAG), 274–295 (ELET…AKLP), 296–318 (KLKN…KGAT), 319–341 (KLQL…SGLS), 342–364 (ELEM…KDLP), 365–386 (NLVN…NNLP), 387–409 (KLQT…TDMP), 410–431 (QLKT…DNLP), 432–453 (KLEK…NDLP), 454–475 (RLSY…KKLP), 476–497 (LLEW…TNFP), 498–519 (SLNY…TELP), 520–541 (SLKE…HDMP), 542–563 (NLRK…DNLP), 564–585 (KLQN…HDLP), 586–607 (SLET…DNLP), 608–629 (ELTY…GDLP), 630–650 (KLEI…GTMD), 654–675 (KLRN…GNLS), 682–704 (NLTE…STLS), 705–726 (RLIY…SNLT), 727–748 (TLQE…SDLD), and 749–770 (NLNK…ANMV). Positions 782-869 (TYTLPTVLSY…SAVKVTANAE (88 aa)) constitute an LRRCT domain. 3 consecutive MucBP domains span residues 1507-1566 (DAAA…EQTV), 1572-1631 (AIEP…PQTI), and 1641-1702 (SKKS…SQTV). Positions 1713–1737 (SKDEPKVKGKTNQPPSADTKLKVDN) are disordered. The LPXTG sorting signal signature appears at 1740–1744 (LPATG). The residue at position 1743 (T1743) is a Pentaglycyl murein peptidoglycan amidated threonine. Residues 1744–1775 (GDTENMALAVLIGFNMLLVASIFLFRKPKTNQ) constitute a propeptide, removed by sortase.

This sequence belongs to the internalin family.

Its subcellular location is the secreted. It localises to the cell wall. Its function is as follows. A role in virulence could not be demonstrated. The protein is Internalin I (inlI) of Listeria monocytogenes serotype 4b (strain F2365).